We begin with the raw amino-acid sequence, 237 residues long: Phosphoribosylaminoimidazole-succinocarboxamide synthase (237 aa).

The protein belongs to the SAICAR synthetase family.

The enzyme catalyses 5-amino-1-(5-phospho-D-ribosyl)imidazole-4-carboxylate + L-aspartate + ATP = (2S)-2-[5-amino-1-(5-phospho-beta-D-ribosyl)imidazole-4-carboxamido]succinate + ADP + phosphate + 2 H(+). The protein operates within purine metabolism; IMP biosynthesis via de novo pathway; 5-amino-1-(5-phospho-D-ribosyl)imidazole-4-carboxamide from 5-amino-1-(5-phospho-D-ribosyl)imidazole-4-carboxylate: step 1/2. The sequence is that of Phosphoribosylaminoimidazole-succinocarboxamide synthase from Deinococcus radiodurans (strain ATCC 13939 / DSM 20539 / JCM 16871 / CCUG 27074 / LMG 4051 / NBRC 15346 / NCIMB 9279 / VKM B-1422 / R1).